Here is a 383-residue protein sequence, read N- to C-terminus: NifS-like protein (383 aa).

Residues 58 to 59 (SE) and 184 to 186 (SLN) contribute to the pyridoxal 5'-phosphate site.

Belongs to the class-V pyridoxal-phosphate-dependent aminotransferase family. NifS/IscS subfamily. It depends on pyridoxal 5'-phosphate as a cofactor.

It is found in the virion. This chain is NifS-like protein, found in African swine fever virus (isolate Pig/Kenya/KEN-50/1950) (ASFV).